The sequence spans 94 residues: Large ribosomal subunit protein eL43B (94 aa).

The C4-type zinc finger occupies cysteine 39–cysteine 62.

This sequence belongs to the eukaryotic ribosomal protein eL43 family. Component of the large ribosomal subunit (LSU). Mature yeast ribosomes consist of a small (40S) and a large (60S) subunit. The 40S small subunit contains 1 molecule of ribosomal RNA (18S rRNA) and at least 33 different proteins. The large 60S subunit contains 3 rRNA molecules (25S, 5.8S and 5S rRNA) and at least 46 different proteins.

It is found in the cytoplasm. Its function is as follows. Component of the ribosome, a large ribonucleoprotein complex responsible for the synthesis of proteins in the cell. The small ribosomal subunit (SSU) binds messenger RNAs (mRNAs) and translates the encoded message by selecting cognate aminoacyl-transfer RNA (tRNA) molecules. The large subunit (LSU) contains the ribosomal catalytic site termed the peptidyl transferase center (PTC), which catalyzes the formation of peptide bonds, thereby polymerizing the amino acids delivered by tRNAs into a polypeptide chain. The nascent polypeptides leave the ribosome through a tunnel in the LSU and interact with protein factors that function in enzymatic processing, targeting, and the membrane insertion of nascent chains at the exit of the ribosomal tunnel. The polypeptide is Large ribosomal subunit protein eL43B (rpl4302) (Schizosaccharomyces pombe (strain 972 / ATCC 24843) (Fission yeast)).